The primary structure comprises 1568 residues: Myosin-2 (1568 aa).

The Myosin N-terminal SH3-like domain occupies 4–57; the sequence is EVGTRCWYPHKELGWIGAEVIKNEVKDGKYHLELSLEDDEVVSVDTEDLNDDKN. The Myosin motor domain occupies 70-783; sequence EATEDLTSLS…MLAYLEKLRS (714 aa). ATP is bound at residue 164 to 171; sequence GESGAGKT. Positions 443 to 523 are actin-binding; it reads FIGVLDIYGF…LGILSLLDEE (81 aa). The disordered stretch occupies residues 619–641; it reads KKAELEQNNPGNKKPGPARTVNR. IQ domains are found at residues 786-808, 809-833, 834-856, 857-881, 882-904, and 905-934; these read MHNS…QYLK, ISQA…YHEM, KVHS…NVFN, VLIT…KREH, EYNA…TFLN, and TKRD…DAKS. A coiled-coil region spans residues 944 to 1088; that stretch reads KLENKVIELT…ISRLQTAMSL (145 aa). The tract at residues 1089 to 1568 is non alpha-helical, tail domain; it reads GTVTTSVLPQ…VAQQVVQDGH (480 aa). A Dilute domain is found at 1223–1498; the sequence is AQVLTTIQKV…LRYVADIVKK (276 aa).

It belongs to the TRAFAC class myosin-kinesin ATPase superfamily. Myosin family. Homodimer. Interacts with calmodulin (CMD1) and the myosin light chain MLC1 through its IQ repeats.

Its function is as follows. Myosin heavy chain that is required for the cell cycle-regulated transport of various organelles and proteins for their segregation. Functions by binding with its tail domain to receptor proteins on organelles and exerting force with its N-terminal motor domain against actin filaments, thereby transporting its cargo along polarized actin cables. This Saccharomyces uvarum (strain ATCC 76518 / CBS 7001 / CLIB 283 / NBRC 10550 / MCYC 623 / NCYC 2669 / NRRL Y-11845) (Yeast) protein is Myosin-2 (MYO2).